The primary structure comprises 456 residues: L-seryl-tRNA(Sec) selenium transferase (456 aa).

Lys-288 is modified (N6-(pyridoxal phosphate)lysine).

It belongs to the SelA family. Requires pyridoxal 5'-phosphate as cofactor.

It localises to the cytoplasm. It catalyses the reaction L-seryl-tRNA(Sec) + selenophosphate + H(+) = L-selenocysteinyl-tRNA(Sec) + phosphate. It functions in the pathway aminoacyl-tRNA biosynthesis; selenocysteinyl-tRNA(Sec) biosynthesis; selenocysteinyl-tRNA(Sec) from L-seryl-tRNA(Sec) (bacterial route): step 1/1. Functionally, converts seryl-tRNA(Sec) to selenocysteinyl-tRNA(Sec) required for selenoprotein biosynthesis. The protein is L-seryl-tRNA(Sec) selenium transferase of Helicobacter hepaticus (strain ATCC 51449 / 3B1).